A 216-amino-acid chain; its full sequence is MRFFIDTANVEDIKKAHQMGVIGGVTTNPSLVAKEGVDFHTRLREICEIVGDLSVSAEVIALDAPGMVEEGKELAAIAPNITVKVPMTPAGMEAVKQFKELGIKTNVTLIFNANQALLAARAGASYVSPFIGRLDDIGQDGLDLVETIANIFAIHGIETEIIAASVRHPVHVTKAALLGADIATVPYKVIEQMMKHPLTDKGIEQFLADWNNAQSK.

Lysine 84 acts as the Schiff-base intermediate with substrate in catalysis.

This sequence belongs to the transaldolase family. Type 3B subfamily.

It is found in the cytoplasm. The catalysed reaction is D-sedoheptulose 7-phosphate + D-glyceraldehyde 3-phosphate = D-erythrose 4-phosphate + beta-D-fructose 6-phosphate. It functions in the pathway carbohydrate degradation; pentose phosphate pathway; D-glyceraldehyde 3-phosphate and beta-D-fructose 6-phosphate from D-ribose 5-phosphate and D-xylulose 5-phosphate (non-oxidative stage): step 2/3. Transaldolase is important for the balance of metabolites in the pentose-phosphate pathway. The sequence is that of Probable transaldolase from Exiguobacterium sp. (strain ATCC BAA-1283 / AT1b).